Here is a 223-residue protein sequence, read N- to C-terminus: MOB-like protein phocein (223 aa).

Zn(2+) is bound by residues Cys-92, Cys-97, Cys-110, His-113, Cys-119, His-127, His-169, and His-174.

It belongs to the MOB1/phocein family. As to quaternary structure, part of the core of STRIPAK complexes composed of PP2A catalytic and scaffolding subunits, the striatins (PP2A regulatory subunits), the striatin-associated proteins MOB4, STRIP1 and STRIP2, PDCD10 and members of the STE20 kinases, such as STK24 and STK26.

The protein resides in the cytoplasm. It localises to the membrane. The protein localises to the golgi apparatus. It is found in the golgi stack membrane. Part of the striatin-interacting phosphatase and kinase (STRIPAK) complexes. STRIPAK complexes have critical roles in protein (de)phosphorylation and are regulators of multiple signaling pathways including Hippo, MAPK, nuclear receptor and cytoskeleton remodeling. Different types of STRIPAK complexes are involved in a variety of biological processes such as cell growth, differentiation, apoptosis, metabolism and immune regulation. This is MOB-like protein phocein (MOB4) from Gallus gallus (Chicken).